Consider the following 29-residue polypeptide: CENTISGCSRADCLLTHRKQGCQKTCGLC.

Residues 1–29 (CENTISGCSRADCLLTHRKQGCQKTCGLC) enclose the ShKT domain. Disulfide bonds link cysteine 1/cysteine 29, cysteine 8/cysteine 22, and cysteine 13/cysteine 26.

The protein belongs to the sea anemone type 1 potassium channel toxin family. Type 1a subfamily.

It localises to the secreted. The protein resides in the nematocyst. In terms of biological role, this peptide is similar to the potassium channel toxin ShK, but does not show activity on potassium channels. It appears that Lys-19, which is expected to occupy the pore of the channel, is not sufficiently accessible for binding, and therefore that this peptide must have a distinct functional role that does not involve potassium channels. It is noteworthy that this peptide is much more stable in the presence of trypsin, chymotrypsin and pepsin than the toxin ShK. The polypeptide is ShK homolog Ask132958 (Anemonia sulcata (Mediterranean snakelocks sea anemone)).